Reading from the N-terminus, the 229-residue chain is Ribonuclease 3 (229 aa).

Residues 5 to 127 (LSRLERQLGY…LIGAIYLDAG (123 aa)) enclose the RNase III domain. Position 40 (glutamate 40) interacts with Mg(2+). The active site involves aspartate 44. Aspartate 113 and glutamate 116 together coordinate Mg(2+). The active site involves glutamate 116. Residues 154 to 224 (DPKTRLQEFL…AAAALIALGV (71 aa)) enclose the DRBM domain.

It belongs to the ribonuclease III family. In terms of assembly, homodimer. The cofactor is Mg(2+).

It is found in the cytoplasm. The catalysed reaction is Endonucleolytic cleavage to 5'-phosphomonoester.. Its function is as follows. Digests double-stranded RNA. Involved in the processing of primary rRNA transcript to yield the immediate precursors to the large and small rRNAs (23S and 16S). Processes some mRNAs, and tRNAs when they are encoded in the rRNA operon. Processes pre-crRNA and tracrRNA of type II CRISPR loci if present in the organism. The polypeptide is Ribonuclease 3 (Pseudomonas syringae pv. syringae (strain B728a)).